Here is an 80-residue protein sequence, read N- to C-terminus: Growth factor (80 aa).

The N-terminal stretch at 1 to 19 is a signal peptide; it reads MATRNLVASLLCIMYAVHA. An EGF-like domain is found at 29 to 73; sequence HVKVCNHDYENYCLNNGTCFTIALDNVSITPFCVCRINYEGSRCQ. Disulfide bonds link Cys33–Cys47, Cys41–Cys61, and Cys63–Cys72. N-linked (GlcNAc...) asparagine; by host glycans are attached at residues Asn44 and Asn54.

The protein localises to the secreted. The sequence is that of Growth factor from Oryctolagus cuniculus (Rabbit).